The sequence spans 393 residues: Cytochrome b (393 aa).

4 helical membrane passes run 32 to 52 (FGSL…TLAM), 76 to 98 (WLIR…LHMG), 113 to 133 (VWTL…LGYV), and 179 to 199 (FFAL…MHLI). His-82 and His-96 together coordinate heme b. Heme b contacts are provided by His-183 and His-197. His-202 is an a ubiquinone binding site. The next 4 helical transmembrane spans lie at 226 to 246 (FIFK…IFVF), 290 to 310 (LLGV…PFTD), 322 to 342 (LSKI…KLGA), and 349 to 369 (FIEF…IIVP).

The protein belongs to the cytochrome b family. As to quaternary structure, fungal cytochrome b-c1 complex contains 10 subunits; 3 respiratory subunits, 2 core proteins and 5 low-molecular weight proteins. Cytochrome b-c1 complex is a homodimer. Heme b is required as a cofactor.

Its subcellular location is the mitochondrion inner membrane. In terms of biological role, component of the ubiquinol-cytochrome c reductase complex (complex III or cytochrome b-c1 complex) that is part of the mitochondrial respiratory chain. The b-c1 complex mediates electron transfer from ubiquinol to cytochrome c. Contributes to the generation of a proton gradient across the mitochondrial membrane that is then used for ATP synthesis. This is Cytochrome b (COB) from Venturia inaequalis (Apple scab fungus).